Consider the following 138-residue polypeptide: Putative pre-16S rRNA nuclease (138 aa).

It belongs to the YqgF nuclease family.

Its subcellular location is the cytoplasm. Could be a nuclease involved in processing of the 5'-end of pre-16S rRNA. In Helicobacter hepaticus (strain ATCC 51449 / 3B1), this protein is Putative pre-16S rRNA nuclease.